A 228-amino-acid chain; its full sequence is Uracil-DNA glycosylase (228 aa).

Catalysis depends on Asp-64, which acts as the Proton acceptor.

Belongs to the uracil-DNA glycosylase (UDG) superfamily. UNG family.

The protein resides in the cytoplasm. The enzyme catalyses Hydrolyzes single-stranded DNA or mismatched double-stranded DNA and polynucleotides, releasing free uracil.. Functionally, excises uracil residues from the DNA which can arise as a result of misincorporation of dUMP residues by DNA polymerase or due to deamination of cytosine. The protein is Uracil-DNA glycosylase of Yersinia pestis bv. Antiqua (strain Antiqua).